The following is a 1069-amino-acid chain: Protogenin B (1069 aa).

The N-terminal stretch at Met-1–Gly-26 is a signal peptide. Topologically, residues Phe-27–Ser-936 are extracellular. Ig-like domains follow at residues Leu-30–Thr-117, Leu-122–Val-208, Pro-221–Thr-308, and Pro-312–Ile-396. Cystine bridges form between Cys-51–Cys-100 and Cys-143–Cys-191. Residues Asn-81, Asn-88, Asn-180, and Asn-229 are each glycosylated (N-linked (GlcNAc...) asparagine). Cys-242 and Cys-290 are joined by a disulfide. Asn-299 and Asn-306 each carry an N-linked (GlcNAc...) asparagine glycan. The interval Lys-317–Glu-336 is disordered. Cysteines 333 and 380 form a disulfide. Fibronectin type-III domains lie at Ala-406 to Asp-500, Pro-502 to Thr-601, Pro-608 to Thr-701, Pro-711 to Glu-804, and Pro-809 to Lys-904. N-linked (GlcNAc...) asparagine glycans are attached at residues Asn-458, Asn-473, and Asn-560. Over residues Pro-590 to Thr-605 the composition is skewed to polar residues. A disordered region spans residues Pro-590 to Ala-609. N-linked (GlcNAc...) asparagine glycosylation is found at Asn-618, Asn-720, and Asn-834. The helical transmembrane segment at Gly-937 to Leu-957 threads the bilayer. Residues Ser-958–Ala-1069 lie on the Cytoplasmic side of the membrane.

The protein belongs to the immunoglobulin superfamily. DCC family. Initially expressed in the ventral forebrain and ventral spinal cord. Later, also expressed in the midbrain and in parts of the diencephalon and hindbrain.

The protein localises to the membrane. Functionally, may play a role in anteroposterior axis elongation. The protein is Protogenin B of Danio rerio (Zebrafish).